A 631-amino-acid chain; its full sequence is FAST kinase domain-containing protein 4 (631 aa).

The transit peptide at 1-107 directs the protein to the mitochondrion; the sequence is MAAHLVKRCT…NQAAMVLIRL (107 aa). At Ser-553 the chain carries Phosphoserine. The RAP domain maps to 561–619; the sequence is LAFLRWEFPNFNSRSKDLLGRFVLARRHIVAAGFLIVDVPFYEWLELKSEWQKGAYLKD.

It belongs to the FAST kinase family. In terms of tissue distribution, ubiquitously expressed. Expression detected in spleen, thymus, testis, ovary, colon, heart, smooth muscle, kidney, brain, lung, liver and white adipose tissue with highest expression in smooth muscle.

Its subcellular location is the mitochondrion matrix. Functionally, plays a role in processing of mitochondrial RNA precursors and in stabilization of a subset of mature mitochondrial RNA species, such as MT-CO1, MT-CO2, MT-CYB, MT-CO3, MT-ND3, MT-ND5 and MT-ATP8/6. May play a role in cell cycle progression. This Homo sapiens (Human) protein is FAST kinase domain-containing protein 4.